We begin with the raw amino-acid sequence, 62 residues long: Large ribosomal subunit protein uL15 (62 aa).

It belongs to the universal ribosomal protein uL15 family.

In Candida albicans (Yeast), this protein is Large ribosomal subunit protein uL15 (RPL28).